The sequence spans 431 residues: Glutamate-1-semialdehyde 2,1-aminomutase (431 aa).

Lys-269 carries the N6-(pyridoxal phosphate)lysine modification.

This sequence belongs to the class-III pyridoxal-phosphate-dependent aminotransferase family. HemL subfamily. As to quaternary structure, homodimer. The cofactor is pyridoxal 5'-phosphate.

Its subcellular location is the cytoplasm. The enzyme catalyses (S)-4-amino-5-oxopentanoate = 5-aminolevulinate. It functions in the pathway porphyrin-containing compound metabolism; protoporphyrin-IX biosynthesis; 5-aminolevulinate from L-glutamyl-tRNA(Glu): step 2/2. It participates in porphyrin-containing compound metabolism; chlorophyll biosynthesis. The polypeptide is Glutamate-1-semialdehyde 2,1-aminomutase (Chlorobium phaeobacteroides (strain BS1)).